The primary structure comprises 356 residues: Leucine carboxyl methyltransferase 1 (356 aa).

S-adenosyl-L-methionine is bound by residues Arg-78, Gly-101, Asp-127, 183-184 (DL), and Glu-218.

Belongs to the methyltransferase superfamily. LCMT family.

The enzyme catalyses [phosphatase 2A protein]-C-terminal L-leucine + S-adenosyl-L-methionine = [phosphatase 2A protein]-C-terminal L-leucine methyl ester + S-adenosyl-L-homocysteine. Its function is as follows. Methylates the carboxyl group of the C-terminal leucine residue of protein phosphatase 2A catalytic subunits to form alpha-leucine ester residues. The sequence is that of Leucine carboxyl methyltransferase 1 (PPM1) from Cryptococcus neoformans var. neoformans serotype D (strain JEC21 / ATCC MYA-565) (Filobasidiella neoformans).